A 430-amino-acid chain; its full sequence is Dihydroorotase (430 aa).

Residues H57 and H59 each coordinate Zn(2+). Substrate-binding positions include 59-61 (HLR) and N91. Zn(2+) contacts are provided by D151, H178, and H231. Residue N277 coordinates substrate. D304 is a binding site for Zn(2+). Residue D304 is part of the active site. Residues H308 and 322–323 (PG) contribute to the substrate site.

This sequence belongs to the metallo-dependent hydrolases superfamily. DHOase family. Class I DHOase subfamily. Zn(2+) serves as cofactor.

The enzyme catalyses (S)-dihydroorotate + H2O = N-carbamoyl-L-aspartate + H(+). Its pathway is pyrimidine metabolism; UMP biosynthesis via de novo pathway; (S)-dihydroorotate from bicarbonate: step 3/3. Catalyzes the reversible cyclization of carbamoyl aspartate to dihydroorotate. This chain is Dihydroorotase, found in Mycobacterium bovis (strain ATCC BAA-935 / AF2122/97).